We begin with the raw amino-acid sequence, 140 residues long: Glycine cleavage system H protein (140 aa).

The Lipoyl-binding domain occupies 22-104; that stretch reads EVVIGITRFA…YGKGWMLRLK (83 aa). An N6-lipoyllysine modification is found at Lys-63.

This sequence belongs to the GcvH family. As to quaternary structure, the glycine cleavage system is composed of four proteins: P, T, L and H. (R)-lipoate serves as cofactor.

In terms of biological role, the glycine cleavage system catalyzes the degradation of glycine. The H protein shuttles the methylamine group of glycine from the P protein to the T protein. The chain is Glycine cleavage system H protein from Magnetococcus marinus (strain ATCC BAA-1437 / JCM 17883 / MC-1).